Consider the following 105-residue polypeptide: Mini zinc finger protein 2 (105 aa).

The disordered stretch occupies residues 1 to 29; that stretch reads MGPQQDRSAAKPYANGSTAAAAAAGRKEN. The ZF-HD dimerization-type; degenerate zinc-finger motif lies at 35 to 84; sequence YRECQRNHAASIGGHAVDGCREFMASGADGTAAALLCAACGCHQSFHRRE.

In terms of assembly, homo- and heterodimers.

The protein resides in the cytoplasm. In terms of biological role, inhibits zinc finger homeodomain (ZHD) transcription factors, by interacting with them to prevent both their nuclear localization and their DNA-binding properties. The protein is Mini zinc finger protein 2 (MIF2) of Oryza sativa subsp. indica (Rice).